A 558-amino-acid chain; its full sequence is TNF receptor-associated factor 5 (558 aa).

Residues 45 to 85 (CAFCHSVLHNPHQTGCGHRFCQQCIRSLRELNSVPICPVDK) form an RING-type zinc finger. 2 TRAF-type zinc fingers span residues 127–181 (DHLQ…TNLQ) and 182–239 (DHEE…GNLL). A coiled-coil region spans residues 252–302 (LVLEKNYQLEQRISDLYQSLEQKESKIQQLAETVKKFEKELKQFTQMFGRN). Lysine 318 participates in a covalent cross-link: Glycyl lysine isopeptide (Lys-Gly) (interchain with G-Cter in ubiquitin). Residues 340 to 400 (LDLRSLVDAV…EERFKQLEGA (61 aa)) are a coiled coil. The interval 345–558 (LVDAVDSVKQ…AVDLTDLEDL (214 aa)) is interaction with EIF2AK2/PKR. Residues 403–550 (SGKLIWKVTD…DDTLFLKVAV (148 aa)) form the MATH domain.

Belongs to the TNF receptor-associated factor family. A subfamily. Homotrimer. Heterotrimer with TRAF3. Associates with TNFRSF5/CD40 through interaction with TRAF3. Associates with LTBR/TNFRSF3, TNFRSF4, TNFRSF8/CD30, TNFRSF11A/RANK, TNFRSF13B/TACI, TNFRSF14, TNFRSF17, TNFRSF19/TROY, RIPK2, MAP3K14, MAP3K5, and TRAF and TNF receptor associated protein TDP2. Interacts (via C-terminus) with EIF2AK2/PKR (via the kinase catalytic domain). Ubiquitinated at Lys-318 by the SCF(FBXL2) complex, leading to its degradation by the proteasome.

The protein localises to the cytoplasm. It is found in the cytosol. Adapter protein and signal transducer that links members of the tumor necrosis factor receptor family to different signaling pathways by association with the receptor cytoplasmic domain and kinases. Mediates activation of NF-kappa-B and probably JNK. Seems to be involved in apoptosis. Plays a role in mediating activation of NF-kappa-B by EIF2AK2/PKR. The sequence is that of TNF receptor-associated factor 5 (Traf5) from Mus musculus (Mouse).